Reading from the N-terminus, the 55-residue chain is Regulatory protein MokB (55 aa).

In terms of biological role, overlapping regulatory peptide whose translation enables hokB expression. This chain is Regulatory protein MokB (mokB), found in Escherichia coli (strain K12).